Here is a 135-residue protein sequence, read N- to C-terminus: Basic phospholipase A2 10 (135 aa).

Cystine bridges form between cysteine 28/cysteine 87, cysteine 42/cysteine 134, cysteine 44/cysteine 60, cysteine 59/cysteine 115, cysteine 66/cysteine 108, cysteine 76/cysteine 101, and cysteine 94/cysteine 106. Ca(2+)-binding residues include tyrosine 43, glycine 45, and glycine 47. The active site involves histidine 63. Aspartate 64 is a binding site for Ca(2+). Aspartate 109 is a catalytic residue.

Belongs to the phospholipase A2 family. Group I subfamily. D49 sub-subfamily. The cofactor is Ca(2+). Expressed by the venom gland.

The protein localises to the secreted. It catalyses the reaction a 1,2-diacyl-sn-glycero-3-phosphocholine + H2O = a 1-acyl-sn-glycero-3-phosphocholine + a fatty acid + H(+). Functionally, snake venom phospholipase A2 (PLA2) that inhibits neuromuscular transmission by blocking acetylcholine release from the nerve termini. PLA2 catalyzes the calcium-dependent hydrolysis of the 2-acyl groups in 3-sn-phosphoglycerides. This Bungarus fasciatus (Banded krait) protein is Basic phospholipase A2 10.